Here is a 402-residue protein sequence, read N- to C-terminus: Arginine deiminase (402 aa).

C391 acts as the Amidino-cysteine intermediate in catalysis.

Belongs to the arginine deiminase family.

The protein resides in the cytoplasm. It catalyses the reaction L-arginine + H2O = L-citrulline + NH4(+). It participates in amino-acid degradation; L-arginine degradation via ADI pathway; carbamoyl phosphate from L-arginine: step 1/2. In Mycobacterium marinum (strain ATCC BAA-535 / M), this protein is Arginine deiminase.